A 187-amino-acid polypeptide reads, in one-letter code: Elongation factor P (187 aa).

The protein belongs to the elongation factor P family.

It localises to the cytoplasm. It functions in the pathway protein biosynthesis; polypeptide chain elongation. Functionally, involved in peptide bond synthesis. Stimulates efficient translation and peptide-bond synthesis on native or reconstituted 70S ribosomes in vitro. Probably functions indirectly by altering the affinity of the ribosome for aminoacyl-tRNA, thus increasing their reactivity as acceptors for peptidyl transferase. This Ruegeria pomeroyi (strain ATCC 700808 / DSM 15171 / DSS-3) (Silicibacter pomeroyi) protein is Elongation factor P.